The primary structure comprises 188 residues: Probable nicotinate-nucleotide adenylyltransferase (188 aa).

The protein belongs to the NadD family.

It catalyses the reaction nicotinate beta-D-ribonucleotide + ATP + H(+) = deamido-NAD(+) + diphosphate. It functions in the pathway cofactor biosynthesis; NAD(+) biosynthesis; deamido-NAD(+) from nicotinate D-ribonucleotide: step 1/1. Functionally, catalyzes the reversible adenylation of nicotinate mononucleotide (NaMN) to nicotinic acid adenine dinucleotide (NaAD). The chain is Probable nicotinate-nucleotide adenylyltransferase from Solibacter usitatus (strain Ellin6076).